The primary structure comprises 440 residues: Thymidine phosphorylase (440 aa).

The protein belongs to the thymidine/pyrimidine-nucleoside phosphorylase family. Homodimer.

It catalyses the reaction thymidine + phosphate = 2-deoxy-alpha-D-ribose 1-phosphate + thymine. The protein operates within pyrimidine metabolism; dTMP biosynthesis via salvage pathway; dTMP from thymine: step 1/2. In terms of biological role, the enzymes which catalyze the reversible phosphorolysis of pyrimidine nucleosides are involved in the degradation of these compounds and in their utilization as carbon and energy sources, or in the rescue of pyrimidine bases for nucleotide synthesis. The protein is Thymidine phosphorylase of Salmonella choleraesuis (strain SC-B67).